Here is a 453-residue protein sequence, read N- to C-terminus: Aminodeoxychorismate synthase component 1 (453 aa).

L-tryptophan is bound by residues S36, 43 to 46, and 240 to 242; these read YSRF and PFS. Catalysis depends on E258, which acts as the Proton donor. Residue K274 is the N6-(4-deoxychorismate)-lysine intermediate of the active site.

The protein belongs to the anthranilate synthase component I family. As to quaternary structure, monomer. Heterodimer consisting of two non-identical subunits: a glutamine amidotransferase subunit (PabA) and a aminodeoxychorismate synthase subunit (PabB). Requires Mg(2+) as cofactor.

The catalysed reaction is chorismate + L-glutamine = 4-amino-4-deoxychorismate + L-glutamate. It participates in cofactor biosynthesis; tetrahydrofolate biosynthesis; 4-aminobenzoate from chorismate: step 1/2. Inhibited by 6-diazo-5-oxo-L-norleucine (DON). The inhibition is competitive with glutamine but uncompetitive with chorismate. Also inhibited by 2-fluorochorismate. In terms of biological role, part of a heterodimeric complex that catalyzes the two-step biosynthesis of 4-amino-4-deoxychorismate (ADC), a precursor of p-aminobenzoate (PABA) and tetrahydrofolate. In the first step, a glutamine amidotransferase (PabA) generates ammonia as a substrate that, along with chorismate, is used in the second step, catalyzed by aminodeoxychorismate synthase (PabB) to produce ADC. PabB, in the absence of PabA, can catalyze the formation of ADC in the presence of exogenous ammonia. The protein is Aminodeoxychorismate synthase component 1 (pabB) of Escherichia coli (strain K12).